Reading from the N-terminus, the 239-residue chain is Fatty acid metabolism regulator protein (239 aa).

An HTH gntR-type domain is found at 6–74 (QSPAGFAEEY…HGKPTKVNNF (69 aa)). Positions 34-53 (ERELSELIGVTRTTLREVLQ) form a DNA-binding region, H-T-H motif.

As to quaternary structure, homodimer.

It is found in the cytoplasm. Multifunctional regulator of fatty acid metabolism. The polypeptide is Fatty acid metabolism regulator protein (Enterobacter sp. (strain 638)).